The primary structure comprises 101 residues: Replication restart protein PriB (101 aa).

Positions 1-101 (MTTNNLVLSG…IHAENVELKT (101 aa)) constitute an SSB domain.

The protein belongs to the PriB family. In terms of assembly, homodimer. Interacts with PriA and DnaT. Component of the replication restart primosome. Primosome assembly occurs via a 'hand-off' mechanism. PriA binds to replication forks, subsequently PriB then DnaT bind; DnaT then displaces ssDNA to generate the helicase loading substrate.

Functionally, involved in the restart of stalled replication forks, which reloads the replicative helicase on sites other than the origin of replication; the PriA-PriB pathway is the major replication restart pathway. During primosome assembly it facilitates complex formation between PriA and DnaT on DNA; stabilizes PriA on DNA. Stimulates the DNA unwinding activity of PriA helicase. The polypeptide is Replication restart protein PriB (Shewanella baltica (strain OS223)).